A 207-amino-acid polypeptide reads, in one-letter code: 2,3-bisphosphoglycerate-dependent phosphoglycerate mutase (207 aa).

Substrate is bound by residues 10–17 (RHGQSEWN), 23–24 (TG), Arg62, 89–92 (ERDY), Lys100, 116–117 (RR), and 160–161 (GN). His11 functions as the Tele-phosphohistidine intermediate in the catalytic mechanism. Residue Glu89 is the Proton donor/acceptor of the active site.

The protein belongs to the phosphoglycerate mutase family. BPG-dependent PGAM subfamily. In terms of assembly, homodimer.

The enzyme catalyses (2R)-2-phosphoglycerate = (2R)-3-phosphoglycerate. It participates in carbohydrate degradation; glycolysis; pyruvate from D-glyceraldehyde 3-phosphate: step 3/5. Functionally, catalyzes the interconversion of 2-phosphoglycerate and 3-phosphoglycerate. In Nitrobacter winogradskyi (strain ATCC 25391 / DSM 10237 / CIP 104748 / NCIMB 11846 / Nb-255), this protein is 2,3-bisphosphoglycerate-dependent phosphoglycerate mutase.